A 510-amino-acid chain; its full sequence is Probable cytosol aminopeptidase (510 aa).

The Mn(2+) site is built by Lys-282 and Asp-287. Lys-294 is an active-site residue. Mn(2+) contacts are provided by Asp-305, Asp-364, and Glu-366. The active site involves Arg-368.

Belongs to the peptidase M17 family. It depends on Mn(2+) as a cofactor.

The protein resides in the cytoplasm. It carries out the reaction Release of an N-terminal amino acid, Xaa-|-Yaa-, in which Xaa is preferably Leu, but may be other amino acids including Pro although not Arg or Lys, and Yaa may be Pro. Amino acid amides and methyl esters are also readily hydrolyzed, but rates on arylamides are exceedingly low.. The enzyme catalyses Release of an N-terminal amino acid, preferentially leucine, but not glutamic or aspartic acids.. In terms of biological role, presumably involved in the processing and regular turnover of intracellular proteins. Catalyzes the removal of unsubstituted N-terminal amino acids from various peptides. The protein is Probable cytosol aminopeptidase of Cupriavidus metallidurans (strain ATCC 43123 / DSM 2839 / NBRC 102507 / CH34) (Ralstonia metallidurans).